Here is a 928-residue protein sequence, read N- to C-terminus: BCAS3 microtubule associated cell migration factor (928 aa).

M1 carries the N-acetylmethionine modification. Residue K215 forms a Glycyl lysine isopeptide (Lys-Gly) (interchain with G-Cter in SUMO1); alternate linkage. A Glycyl lysine isopeptide (Lys-Gly) (interchain with G-Cter in SUMO2); alternate cross-link involves residue K215. Required for recruitment to preautophagosomal structure in response to mitophagy regions lie at residues 254 to 312 (RGGA…SRRS) and 437 to 560 (YGGQ…IKAP). 3 positions are modified to phosphoserine: S461, S480, and S488. Disordered regions lie at residues 472-518 (TSKQ…PRLS) and 795-816 (VRSD…RGVS). 2 stretches are compositionally biased toward low complexity: residues 480-494 (SPVP…GSPL) and 505-514 (NNFTNNNPGN). 3 positions are modified to phosphoserine: S838, S886, and S898. Residues 868-928 (ESPSRDVVGS…PLSLFPTGFP (61 aa)) are disordered. A compositionally biased stretch (low complexity) spans 887–901 (IETLSNSSGSTSGSI).

The protein belongs to the BCAS3 family. As to quaternary structure, interacts with histone H3, ESR1, KAT2B and PELP1; the interactions occur in a estrogen-dependent manner. Interacts with beta-tubulin and VIM. Interacts (via C-terminal) with PHAF1; the interaction is requrired for the association with the phagophore. In terms of tissue distribution, expressed in blood islands and yolk sac blood islands (at protein level). Highly expressed in mammary tumors. Expressed in eostrogen-induced epithelial cells of mammary glands. Expressed in brain, heart, kidney, lung, liver and spleen. Expressed in embryonic stem cells, embryoid bodies, endothelial cells and fibroblasts.

Its subcellular location is the nucleus. The protein localises to the cytoplasm. It localises to the cytoskeleton. The protein resides in the preautophagosomal structure. Functionally, functions synergistically with PELP1 as a transcriptional coactivator of estrogen receptor-responsive genes. Stimulates histone acetyltransferase activity. Binds to chromatin. Plays a role in angiogenesis. Participates in the regulation of cell polarity and directional endothelial cell migration by mediating both the activation and recruitment of CDC42 and the reorganization of the actin cytoskeleton at the cell leading edge. Promotes filipodia formation. Plays a regulatory role in autophagic activity. In complex with PHAF1, associates with the preautophagosomal structure during both non-selective and selective autophagy. Probably binds phosphatidylinositol 3-phosphate (PtdIns3P) which would mediate the recruitment preautophagosomal structures. This Mus musculus (Mouse) protein is BCAS3 microtubule associated cell migration factor.